Consider the following 532-residue polypeptide: Membrane protein insertase YidC (532 aa).

6 helical membrane-spanning segments follow: residues 6–26, 317–337, 342–362, 411–431, 451–473, and 496–516; these read IVLAIILSLVVFLGWHSFAEY, AIDFGMFSIIAKPLLTALTFF, GNWGVAIIVLTLCIKIVFWPL, GGCLPILLQIPVFIGLYQALL, VWLADLSAADPFYITPLLMGASM, and PIIFTVMFLNFPAGLVIYWLF.

The protein belongs to the OXA1/ALB3/YidC family. Type 1 subfamily. As to quaternary structure, interacts with the Sec translocase complex via SecD. Specifically interacts with transmembrane segments of nascent integral membrane proteins during membrane integration.

It localises to the cell membrane. Functionally, required for the insertion and/or proper folding and/or complex formation of integral membrane proteins into the membrane. Involved in integration of membrane proteins that insert both dependently and independently of the Sec translocase complex, as well as at least some lipoproteins. Aids folding of multispanning membrane proteins. This is Membrane protein insertase YidC from Lawsonia intracellularis (strain PHE/MN1-00).